The chain runs to 168 residues: ATP synthase subunit b (168 aa).

A helical membrane pass occupies residues Leu9–Leu29.

The protein belongs to the ATPase B chain family. F-type ATPases have 2 components, F(1) - the catalytic core - and F(0) - the membrane proton channel. F(1) has five subunits: alpha(3), beta(3), gamma(1), delta(1), epsilon(1). F(0) has three main subunits: a(1), b(2) and c(10-14). The alpha and beta chains form an alternating ring which encloses part of the gamma chain. F(1) is attached to F(0) by a central stalk formed by the gamma and epsilon chains, while a peripheral stalk is formed by the delta and b chains.

Its subcellular location is the cell membrane. In terms of biological role, f(1)F(0) ATP synthase produces ATP from ADP in the presence of a proton or sodium gradient. F-type ATPases consist of two structural domains, F(1) containing the extramembraneous catalytic core and F(0) containing the membrane proton channel, linked together by a central stalk and a peripheral stalk. During catalysis, ATP synthesis in the catalytic domain of F(1) is coupled via a rotary mechanism of the central stalk subunits to proton translocation. Component of the F(0) channel, it forms part of the peripheral stalk, linking F(1) to F(0). The protein is ATP synthase subunit b of Caldanaerobacter subterraneus subsp. tengcongensis (strain DSM 15242 / JCM 11007 / NBRC 100824 / MB4) (Thermoanaerobacter tengcongensis).